A 69-amino-acid polypeptide reads, in one-letter code: DNA gyrase inhibitor YacG (69 aa).

Residues Cys9, Cys12, Cys28, and Cys32 each contribute to the Zn(2+) site. Positions 48 to 69 (PVSPDAEDELFSGDLEAPHRGH) are disordered.

The protein belongs to the DNA gyrase inhibitor YacG family. In terms of assembly, interacts with GyrB. The cofactor is Zn(2+).

Inhibits all the catalytic activities of DNA gyrase by preventing its interaction with DNA. Acts by binding directly to the C-terminal domain of GyrB, which probably disrupts DNA binding by the gyrase. This chain is DNA gyrase inhibitor YacG, found in Pseudomonas syringae pv. syringae (strain B728a).